A 51-amino-acid chain; its full sequence is Large ribosomal subunit protein eL39 (51 aa).

The tract at residues 32–51 (KRRVTRSPARRHWRRQKLKA) is disordered.

Belongs to the eukaryotic ribosomal protein eL39 family.

The protein is Large ribosomal subunit protein eL39 of Pyrobaculum calidifontis (strain DSM 21063 / JCM 11548 / VA1).